Consider the following 180-residue polypeptide: Oligoribonuclease (180 aa).

An Exonuclease domain is found at L7–L170. Residue Y128 is part of the active site.

This sequence belongs to the oligoribonuclease family.

It localises to the cytoplasm. Functionally, 3'-to-5' exoribonuclease specific for small oligoribonucleotides. This Pseudomonas fluorescens (strain Pf0-1) protein is Oligoribonuclease.